The primary structure comprises 206 residues: UPF0502 protein Acid_1185 (206 aa).

It belongs to the UPF0502 family.

This chain is UPF0502 protein Acid_1185, found in Solibacter usitatus (strain Ellin6076).